We begin with the raw amino-acid sequence, 241 residues long: Probable transcriptional regulatory protein lin1570 (241 aa).

A compositionally biased stretch (polar residues) spans Met1–Lys14. Residues Met1–Ser22 form a disordered region.

The protein belongs to the TACO1 family.

It localises to the cytoplasm. The polypeptide is Probable transcriptional regulatory protein lin1570 (Listeria innocua serovar 6a (strain ATCC BAA-680 / CLIP 11262)).